We begin with the raw amino-acid sequence, 148 residues long: uncharacterized protein (148 aa).

This is an uncharacterized protein from Pyrococcus woesei.